A 78-amino-acid chain; its full sequence is MKATKLVLGAVILGSTLLAGCSSNAKIDQLSSDVQTLNAKVDQLSNDVNAMRSDVQAAKDDAARANQRLDNMATKYRK.

An N-terminal signal peptide occupies residues 1–20 (MKATKLVLGAVILGSTLLAG). A lipid anchor (N-palmitoyl cysteine) is attached at Cys21. The S-diacylglycerol cysteine moiety is linked to residue Cys21. 2 consecutive repeats follow at residues 24-34 (NAKIDQLSSDV) and 38-48 (NAKVDQLSNDV). The stretch at 27–75 (IDQLSSDVQTLNAKVDQLSNDVNAMRSDVQAAKDDAARANQRLDNMATK) forms a coiled coil. Lys78 carries the N6-murein peptidoglycan lysine modification.

Belongs to the Lpp family. As to quaternary structure, homotrimer.

The protein resides in the cell outer membrane. Its subcellular location is the secreted. It is found in the cell wall. Its function is as follows. A highly abundant outer membrane lipoprotein that controls the distance between the inner and outer membranes. The only protein known to be covalently linked to the peptidoglycan network (PGN). Also non-covalently binds the PGN. The link between the cell outer membrane and PGN contributes to maintenance of the structural and functional integrity of the cell envelope, and maintains the correct distance between the PGN and the outer membrane. The protein is Major outer membrane lipoprotein Lpp of Shigella flexneri.